Here is a 398-residue protein sequence, read N- to C-terminus: Putative F-box/kelch-repeat protein At2g29780 (398 aa).

The tract at residues 1–46 (MAIISETSDDGSHGGVPNKKPEELHKNPKEDDHQEEEVENHPPIPR) is disordered. A compositionally biased stretch (basic and acidic residues) spans 19–32 (KKPEELHKNPKEDD). The F-box domain maps to 43-90 (PIPRQIPQALIRRTVALIKRCHYPSLSLLSKAFRIVISSPELHQTRSS). Kelch repeat units follow at residues 148-195 (KMYV…VING), 196-241 (KIYV…GFVT), 243-289 (VVMQ…VIED), and 295-342 (DPYC…GGKL).

The protein is Putative F-box/kelch-repeat protein At2g29780 of Arabidopsis thaliana (Mouse-ear cress).